Consider the following 508-residue polypeptide: Maturase K (508 aa).

The protein belongs to the intron maturase 2 family. MatK subfamily.

It localises to the plastid. It is found in the chloroplast. Its function is as follows. Usually encoded in the trnK tRNA gene intron. Probably assists in splicing its own and other chloroplast group II introns. This Ranunculus glacialis (Glacier buttercup) protein is Maturase K.